Here is a 146-residue protein sequence, read N- to C-terminus: UPF0178 protein CTC_02403 (146 aa).

The protein belongs to the UPF0178 family.

The polypeptide is UPF0178 protein CTC_02403 (Clostridium tetani (strain Massachusetts / E88)).